We begin with the raw amino-acid sequence, 560 residues long: Oxygen-dependent choline dehydrogenase (560 aa).

Residue 8–37 (DYIIIGAGSAGNVLATRLTEDADVSVLLLE) participates in FAD binding. His475 functions as the Proton acceptor in the catalytic mechanism.

Belongs to the GMC oxidoreductase family. FAD serves as cofactor.

The enzyme catalyses choline + A = betaine aldehyde + AH2. It carries out the reaction betaine aldehyde + NAD(+) + H2O = glycine betaine + NADH + 2 H(+). It participates in amine and polyamine biosynthesis; betaine biosynthesis via choline pathway; betaine aldehyde from choline (cytochrome c reductase route): step 1/1. Involved in the biosynthesis of the osmoprotectant glycine betaine. Catalyzes the oxidation of choline to betaine aldehyde and betaine aldehyde to glycine betaine at the same rate. The chain is Oxygen-dependent choline dehydrogenase from Stenotrophomonas maltophilia (strain R551-3).